The primary structure comprises 256 residues: Isoprenyl transferase (256 aa).

D33 is an active-site residue. D33 lines the Mg(2+) pocket. Substrate-binding positions include 34–37 (GNGR), W38, R46, H50, and 78–80 (STE). The Proton acceptor role is filled by N81. Substrate is bound by residues W82, R84, R201, and 207–209 (RIS). E220 contacts Mg(2+).

This sequence belongs to the UPP synthase family. In terms of assembly, homodimer. Mg(2+) is required as a cofactor.

Functionally, catalyzes the condensation of isopentenyl diphosphate (IPP) with allylic pyrophosphates generating different type of terpenoids. The chain is Isoprenyl transferase from Staphylococcus aureus (strain Mu50 / ATCC 700699).